A 235-amino-acid polypeptide reads, in one-letter code: 2-C-methyl-D-erythritol 4-phosphate cytidylyltransferase (235 aa).

This sequence belongs to the IspD/TarI cytidylyltransferase family. IspD subfamily.

It carries out the reaction 2-C-methyl-D-erythritol 4-phosphate + CTP + H(+) = 4-CDP-2-C-methyl-D-erythritol + diphosphate. The protein operates within isoprenoid biosynthesis; isopentenyl diphosphate biosynthesis via DXP pathway; isopentenyl diphosphate from 1-deoxy-D-xylulose 5-phosphate: step 2/6. Its function is as follows. Catalyzes the formation of 4-diphosphocytidyl-2-C-methyl-D-erythritol from CTP and 2-C-methyl-D-erythritol 4-phosphate (MEP). This Pseudomonas fluorescens (strain SBW25) protein is 2-C-methyl-D-erythritol 4-phosphate cytidylyltransferase.